The following is a 591-amino-acid chain: MMRSHYCGQLNESLDGQEVTLCGWVHRRRDHGGVIFLDIRDREGMAQVVFDPDRAETFAAADRVRSEYVVQITGKVRKRPEGAVNANMASGAIEILGYQLNVLNEAETPPFPLNEYSDVGEETRLRYRFIDLRRPEMADKLRLRSRITSSIRRFLDENGFLDVETPILTRATPEGARDYLVPSRTHAGSFFALPQSPQLFKQLLMVAGFDRYYQIAKCFRDEDLRADRQPEFTQIDIETSFLDESEIMGLTESMIRKLFKEVLDLEFGEFPHMTFEEAMRRYGSDKPDLRIPLELVDVADQLKDVDFKVFAGPANDPKCRVTALRLPGGASMPRSKIDEYTKFVGIYGAKGLAYIKVNERAKGVEGLQSPIVKNIPEANLNNILDRVGAVDGDIVFFGADKFKVVSEALGALRIRLGHDFELLTCEWAPMWVVDFPMFEENEDGSFTALHHPFTAPKCTPEELEANPATALSRAYDMVLNGTELGGGSIRIHRKEMQQAVFRLLGIEAEEQEEKFGFLLDALKFGAPPHGGLAFGLDRLVMLMTGAQSIREVIAFPKTQSAACVMTQAPGMVDAKALRELHIRLREQTKVE.

Glu-174 lines the L-aspartate pocket. The segment at 198–201 (QLFK) is aspartate. Position 220 (Arg-220) interacts with L-aspartate. Residues 220–222 (RDE) and Gln-229 contribute to the ATP site. Residue His-450 participates in L-aspartate binding. Glu-483 is an ATP binding site. Arg-490 is an L-aspartate binding site. ATP is bound at residue 535 to 538 (GLDR).

Belongs to the class-II aminoacyl-tRNA synthetase family. Type 1 subfamily. As to quaternary structure, homodimer.

Its subcellular location is the cytoplasm. It carries out the reaction tRNA(Asx) + L-aspartate + ATP = L-aspartyl-tRNA(Asx) + AMP + diphosphate. Aspartyl-tRNA synthetase with relaxed tRNA specificity since it is able to aspartylate not only its cognate tRNA(Asp) but also tRNA(Asn). Reaction proceeds in two steps: L-aspartate is first activated by ATP to form Asp-AMP and then transferred to the acceptor end of tRNA(Asp/Asn). The chain is Aspartate--tRNA(Asp/Asn) ligase from Pseudomonas putida (strain ATCC 700007 / DSM 6899 / JCM 31910 / BCRC 17059 / LMG 24140 / F1).